The following is an 81-amino-acid chain: Short neurotoxin D (81 aa).

Positions 1 to 21 are cleaved as a signal peptide; it reads MKTLLLTLVVVTIVCLDLGYT. Disulfide bonds link Cys-24–Cys-43, Cys-38–Cys-60, Cys-62–Cys-73, and Cys-74–Cys-79.

This sequence belongs to the three-finger toxin family. Short-chain subfamily. Type I alpha-neurotoxin sub-subfamily. As to expression, expressed by the venom gland.

The protein resides in the secreted. Functionally, binds to muscle nicotinic acetylcholine receptor (nAChR) and inhibit acetylcholine from binding to the receptor, thereby impairing neuromuscular transmission. The sequence is that of Short neurotoxin D from Aipysurus laevis (Olive sea snake).